The sequence spans 104 residues: Putative membrane protein insertion efficiency factor (104 aa).

Positions 83-104 are disordered; that stretch reads SSPTPLAESPDDRTVPHTQETS.

It belongs to the UPF0161 family.

The protein resides in the cell inner membrane. Its function is as follows. Could be involved in insertion of integral membrane proteins into the membrane. The polypeptide is Putative membrane protein insertion efficiency factor (Chlamydia trachomatis serovar D (strain ATCC VR-885 / DSM 19411 / UW-3/Cx)).